We begin with the raw amino-acid sequence, 371 residues long: Aldose sugar dehydrogenase YliI (371 aa).

The signal sequence occupies residues 1–20 (MHRQSFFLVPLICLSSALWA). Q82 serves as a coordination point for pyrroloquinoline quinone. The Proton acceptor role is filled by H147. A PQQ region spans residues 214–215 (RN). Ca(2+) is bound by residues E240 and Y250. Y261 contributes to the pyrroloquinoline quinone binding site. PQQ stretches follow at residues 312–314 (ALK) and 341–343 (RIR).

This sequence belongs to the PQQ oxidoreductase GdhB family. In terms of assembly, monomer. It depends on Ca(2+) as a cofactor. The cofactor is pyrroloquinoline quinone.

The protein localises to the cell outer membrane. Its function is as follows. Aldose sugar dehydrogenase with broad substrate specificity. The physiological substrate is unknown. Can oxidize glucose to gluconolactone. Can also utilize D-arabinose, L-arabinose and 2-deoxy-glucose. Has higher activity towards oligomeric sugars, such as maltose, maltotriose or cellobiose. It may function to input sugar-derived electrons into the respiratory network. The sequence is that of Aldose sugar dehydrogenase YliI (yliI) from Escherichia coli (strain K12).